Consider the following 225-residue polypeptide: 7-cyano-7-deazaguanine synthase (225 aa).

8 to 18 (VSGGADSATVL) is an ATP binding site. Zn(2+) contacts are provided by Cys-188, Cys-198, Cys-201, and Cys-204.

The protein belongs to the QueC family. Zn(2+) serves as cofactor.

The catalysed reaction is 7-carboxy-7-deazaguanine + NH4(+) + ATP = 7-cyano-7-deazaguanine + ADP + phosphate + H2O + H(+). It functions in the pathway purine metabolism; 7-cyano-7-deazaguanine biosynthesis. Functionally, catalyzes the ATP-dependent conversion of 7-carboxy-7-deazaguanine (CDG) to 7-cyano-7-deazaguanine (preQ(0)). The polypeptide is 7-cyano-7-deazaguanine synthase (Rickettsia bellii (strain OSU 85-389)).